Here is an 827-residue protein sequence, read N- to C-terminus: Lon protease 2 (827 aa).

Positions 1-22 are disordered; that stretch reads MSDEKKKGSAASAMPTAMAPPG. Residues 9–21 show a composition bias toward low complexity; that stretch reads SAASAMPTAMAPP. Residues 33–227 form the Lon N-terminal domain; it reads LPILPLRNSV…LVLELLNRKR (195 aa). 379 to 386 lines the ATP pocket; the sequence is GPPGVGKT. The region spanning 615-796 is the Lon proteolytic domain; the sequence is TEVPGVATGL…DDVLKAALET (182 aa). Residues Ser-702 and Lys-745 contribute to the active site. The segment at 799-827 is disordered; it reads VGVAGTPGGEPGKEAPLPKPAESAPEVRA.

Belongs to the peptidase S16 family. In terms of assembly, homohexamer. Organized in a ring with a central cavity.

It localises to the cytoplasm. It carries out the reaction Hydrolysis of proteins in presence of ATP.. Its function is as follows. ATP-dependent serine protease that mediates the selective degradation of mutant and abnormal proteins as well as certain short-lived regulatory proteins. Required for cellular homeostasis and for survival from DNA damage and developmental changes induced by stress. Degrades polypeptides processively to yield small peptide fragments that are 5 to 10 amino acids long. Binds to DNA in a double-stranded, site-specific manner. This is Lon protease 2 from Myxococcus xanthus.